Consider the following 93-residue polypeptide: Small ribosomal subunit protein uS19m (93 aa).

Belongs to the universal ribosomal protein uS19 family.

The protein resides in the mitochondrion. The chain is Small ribosomal subunit protein uS19m (RPS19) from Marchantia polymorpha (Common liverwort).